A 443-amino-acid polypeptide reads, in one-letter code: MQNELAQTIPELINWTKEREFSLSLSSDRLAFLLAISIYNNEQTDGELLESDLIDLFRYVSEVFDQSEATLTQRANNAINDLVKQRFLNRFSSEFTEGLAIYRITPLGVGVADYYVRQREFSTLRLSIQLSIVADEIQRASSAAEEGGDERFWRNNVFAPLKYSVAEIFDSIDLSQRMMDENQHQIRERIAELLSQNWHEAILSCEQLLDETSGNLRELQDTLNAAGDKLQAQLLRIQSCLIGRDDLDFVDQLIVNLQNKLDRIISWGQQAIDLWIGYDRHVHKFIRTAIDMDKNRVFGQHLRQSIQDYFNAPWLLYTAKAESLLDLRDDETMLNEAEAVGELPSELEYESLSDVQEQIISVMQAHLAPFRAEGKPIDLGAVLREQLALYPQSRHFDVARIIVDQAVKLGMASLDSQAVYPEWQAINDNGAEVQANVIDQYNK.

The segment at 209 to 237 (LDETSGNLRELQDTLNAAGDKLQAQLLRI) is leucine-zipper.

Belongs to the MukF family. In terms of assembly, interacts, and probably forms a ternary complex, with MukE and MukB via its C-terminal region. The complex formation is stimulated by calcium or magnesium. It is required for an interaction between MukE and MukB.

It is found in the cytoplasm. The protein resides in the nucleoid. Its function is as follows. Involved in chromosome condensation, segregation and cell cycle progression. May participate in facilitating chromosome segregation by condensation DNA from both sides of a centrally located replisome during cell division. Not required for mini-F plasmid partitioning. Probably acts via its interaction with MukB and MukE. Overexpression results in anucleate cells. It has a calcium binding activity. The protein is Chromosome partition protein MukF of Actinobacillus pleuropneumoniae serotype 3 (strain JL03).